Here is a 33-residue protein sequence, read N- to C-terminus: Alpha-amanitin proprotein (33 aa).

Residues 1–10 (MSDINATRLP) constitute a propeptide that is removed on maturation. Ile-11 is modified ((3R,4R)-4,5-dihydroxyisoleucine; in form alpha-amanitin). Ile-11 is modified ((3R,4S)-4-hydroxyisoleucine; in form gamma-amanitin). The segment at residues 11 to 18 (IWGIGCNP) is a cross-link (cyclopeptide (Ile-Pro)). A cross-link (2'-cysteinyl-6'-hydroxytryptophan sulfoxide (Trp-Cys)) is located at residues 12–16 (WGIGC). A 4-hydroxyproline modification is found at Pro-18. Positions 19-33 (CVGDEVTALITRGEA) are excised as a propeptide.

This sequence belongs to the MSDIN fungal toxin family. In terms of processing, processed by the macrocyclase-peptidase enzyme POPB to yield a toxic cyclic decapeptide. POPB first removes 10 residues from the N-terminus. Conformational trapping of the remaining peptide forces the enzyme to release this intermediate rather than proceed to macrocyclization. The enzyme rebinds the remaining peptide in a different conformation and catalyzes macrocyclization of the N-terminal 8 residues.

Major toxin belonging to the bicyclic octapeptides amatoxins that acts by binding non-competitively to RNA polymerase II and greatly slowing the elongation of transcripts from target promoters. In Amanita pallidorosea, this protein is Alpha-amanitin proprotein.